The primary structure comprises 387 residues: Protein salvador homolog 1 (387 aa).

Phosphoserine is present on residues serine 95 and serine 138. 2 WW domains span residues 201 to 234 and 236 to 269; these read LPLP…HPLE and EGLP…HPCA. At threonine 212 the chain carries Phosphothreonine. Positions 323–370 constitute an SARAH domain; the sequence is ILKWELFQLADLDTYQGMLKLLFMKELEQIVKLYEAYRQALVTELENR.

In terms of assembly, homodimer. Stabilized through interaction with STK3/MST2 or STK4/MST1. Interacts (via SARAH domain) with isoform 1 of NEK2. Interacts with ESR1 only in the presence of STK3/MST2. Interacts with WTIP and AJUBA. In terms of processing, phosphorylated by STK3/MST2 and STK4/MST1. Phosphorylation is not required for SAV1 stability and may increase the number of protein binding sites on the scaffold molecule.

Its subcellular location is the nucleus. It localises to the cytoplasm. Its function is as follows. Regulator of STK3/MST2 and STK4/MST1 in the Hippo signaling pathway which plays a pivotal role in organ size control and tumor suppression by restricting proliferation and promoting apoptosis. The core of this pathway is composed of a kinase cascade wherein STK3/MST2 and STK4/MST1, in complex with its regulatory protein SAV1, phosphorylates and activates LATS1/2 in complex with its regulatory protein MOB1, which in turn phosphorylates and inactivates YAP1 oncoprotein and WWTR1/TAZ. Phosphorylation of YAP1 by LATS1/2 inhibits its translocation into the nucleus to regulate cellular genes important for cell proliferation, cell death, and cell migration. SAV1 is required for STK3/MST2 and STK4/MST1 activation and promotes cell-cycle exit and terminal differentiation in developing epithelial tissues. Plays a role in centrosome disjunction by regulating the localization of NEK2 to centrosomes, and its ability to phosphorylate CROCC and CEP250. In conjunction with STK3/MST2, activates the transcriptional activity of ESR1 through the modulation of its phosphorylation. This chain is Protein salvador homolog 1, found in Rattus norvegicus (Rat).